The sequence spans 132 residues: Phosphoribosyl-AMP cyclohydrolase (132 aa).

Aspartate 86 provides a ligand contact to Mg(2+). Cysteine 87 is a binding site for Zn(2+). Mg(2+) is bound by residues aspartate 88 and aspartate 90. The Zn(2+) site is built by cysteine 103 and cysteine 110.

The protein belongs to the PRA-CH family. In terms of assembly, homodimer. Requires Mg(2+) as cofactor. Zn(2+) serves as cofactor.

The protein localises to the cytoplasm. It catalyses the reaction 1-(5-phospho-beta-D-ribosyl)-5'-AMP + H2O = 1-(5-phospho-beta-D-ribosyl)-5-[(5-phospho-beta-D-ribosylamino)methylideneamino]imidazole-4-carboxamide. It participates in amino-acid biosynthesis; L-histidine biosynthesis; L-histidine from 5-phospho-alpha-D-ribose 1-diphosphate: step 3/9. Functionally, catalyzes the hydrolysis of the adenine ring of phosphoribosyl-AMP. This chain is Phosphoribosyl-AMP cyclohydrolase, found in Haloquadratum walsbyi (strain DSM 16790 / HBSQ001).